A 405-amino-acid polypeptide reads, in one-letter code: Acetate kinase (405 aa).

Asn7 provides a ligand contact to Mg(2+). Lys14 is an ATP binding site. Substrate is bound at residue Arg98. Asp156 (proton donor/acceptor) is an active-site residue. Residues 215 to 219 (HLGNG), 290 to 292 (DLR), and 338 to 342 (GVGEN) each bind ATP. Residue Glu391 participates in Mg(2+) binding.

It belongs to the acetokinase family. In terms of assembly, homodimer. The cofactor is Mg(2+). Requires Mn(2+) as cofactor.

The protein resides in the cytoplasm. It catalyses the reaction acetate + ATP = acetyl phosphate + ADP. It functions in the pathway metabolic intermediate biosynthesis; acetyl-CoA biosynthesis; acetyl-CoA from acetate: step 1/2. In terms of biological role, catalyzes the formation of acetyl phosphate from acetate and ATP. Can also catalyze the reverse reaction. In Gloeobacter violaceus (strain ATCC 29082 / PCC 7421), this protein is Acetate kinase.